Reading from the N-terminus, the 189-residue chain is HGPRTase-like protein (189 aa).

This sequence belongs to the purine/pyrimidine phosphoribosyltransferase family. Archaeal HPRT subfamily.

In terms of biological role, may catalyze a purine salvage reaction, the substrate is unknown. This chain is HGPRTase-like protein, found in Halorhabdus utahensis (strain DSM 12940 / JCM 11049 / AX-2).